The primary structure comprises 205 residues: Protein PYRAB00100 (205 aa).

One can recognise an AMMECR1 domain in the interval 7 to 201; the sequence is EWGEFLVRLA…EEYPRGPVRR (195 aa).

The chain is Protein PYRAB00100 from Pyrococcus abyssi (strain GE5 / Orsay).